A 332-amino-acid chain; its full sequence is Ketol-acid reductoisomerase (NADP(+)) (332 aa).

A KARI N-terminal Rossmann domain is found at 2–182 (AKVYIDKDAS…GATRAGVIET (181 aa)). Residues 25-28 (YGSQ), Ser53, and 83-86 (DMVQ) each bind NADP(+). His108 is a catalytic residue. Gly134 provides a ligand contact to NADP(+). Residues 183–328 (TFKEETETDL…RQIREISLRG (146 aa)) form the KARI C-terminal knotted domain. Residues Asp191, Glu195, Glu227, and Glu231 each coordinate Mg(2+). Ser252 is a substrate binding site.

Belongs to the ketol-acid reductoisomerase family. It depends on Mg(2+) as a cofactor.

The enzyme catalyses (2R)-2,3-dihydroxy-3-methylbutanoate + NADP(+) = (2S)-2-acetolactate + NADPH + H(+). The catalysed reaction is (2R,3R)-2,3-dihydroxy-3-methylpentanoate + NADP(+) = (S)-2-ethyl-2-hydroxy-3-oxobutanoate + NADPH + H(+). It participates in amino-acid biosynthesis; L-isoleucine biosynthesis; L-isoleucine from 2-oxobutanoate: step 2/4. The protein operates within amino-acid biosynthesis; L-valine biosynthesis; L-valine from pyruvate: step 2/4. In terms of biological role, involved in the biosynthesis of branched-chain amino acids (BCAA). Catalyzes an alkyl-migration followed by a ketol-acid reduction of (S)-2-acetolactate (S2AL) to yield (R)-2,3-dihydroxy-isovalerate. In the isomerase reaction, S2AL is rearranged via a Mg-dependent methyl migration to produce 3-hydroxy-3-methyl-2-ketobutyrate (HMKB). In the reductase reaction, this 2-ketoacid undergoes a metal-dependent reduction by NADPH to yield (R)-2,3-dihydroxy-isovalerate. The protein is Ketol-acid reductoisomerase (NADP(+)) of Sulfurisphaera tokodaii (strain DSM 16993 / JCM 10545 / NBRC 100140 / 7) (Sulfolobus tokodaii).